Consider the following 650-residue polypeptide: Chaperone protein DnaK (650 aa).

T200 bears the Phosphothreonine; by autocatalysis mark. Positions G612 to Q632 are enriched in low complexity. A disordered region spans residues G612–K650. The segment covering A641–K650 has biased composition (basic and acidic residues).

This sequence belongs to the heat shock protein 70 family.

Functionally, acts as a chaperone. The polypeptide is Chaperone protein DnaK (Cupriavidus necator (strain ATCC 17699 / DSM 428 / KCTC 22496 / NCIMB 10442 / H16 / Stanier 337) (Ralstonia eutropha)).